The sequence spans 867 residues: Armadillo repeat-containing protein 2 (867 aa).

2 disordered regions span residues 1–115 (MLSP…CFSF) and 214–252 (TSLP…AVPK). Composition is skewed to polar residues over residues 18–28 (PSVSKQKTSAE), 40–50 (VRTQRPFTPQE), and 60–69 (SSRTSENRPP). 2 stretches are compositionally biased toward low complexity: residues 70–81 (SSFSLHASSFES) and 234–243 (SSCPSSSDLS). 12 ARM repeats span residues 262–301 (IEVD…HALE), 304–344 (NMLG…ALKV), 363–403 (EKND…SIKF), 408–449 (LGFL…HLLV), 462–503 (SLVR…KLTS), 506–547 (DCCT…NLTA), 551–589 (QARE…QRGE), 591–616 (HRAQ…NIAI), 619–662 (GVGP…NLSY), 664–705 (QVKN…NLSQ), 707–746 (HDVC…NLTV), and 748–790 (KDKR…NFSE).

As to expression, expressed at higher level in testis.

Required for sperm flagellum axoneme organization and function. Involved in axonemal central pair complex assembly and/or stability. The chain is Armadillo repeat-containing protein 2 from Homo sapiens (Human).